Here is a 260-residue protein sequence, read N- to C-terminus: Triosephosphate isomerase (260 aa).

11-13 (NWK) is a substrate binding site. His103 acts as the Electrophile in catalysis. Residue Glu175 is the Proton acceptor of the active site. Substrate contacts are provided by residues Gly181, Ser220, and 241–242 (GG).

Belongs to the triosephosphate isomerase family. Homodimer.

The protein resides in the cytoplasm. It catalyses the reaction D-glyceraldehyde 3-phosphate = dihydroxyacetone phosphate. The protein operates within carbohydrate biosynthesis; gluconeogenesis. It functions in the pathway carbohydrate degradation; glycolysis; D-glyceraldehyde 3-phosphate from glycerone phosphate: step 1/1. Its function is as follows. Involved in the gluconeogenesis. Catalyzes stereospecifically the conversion of dihydroxyacetone phosphate (DHAP) to D-glyceraldehyde-3-phosphate (G3P). The sequence is that of Triosephosphate isomerase from Shewanella sp. (strain MR-4).